The following is a 282-amino-acid chain: Blarina toxin (282 aa).

The signal sequence occupies residues 1–17 (MCFLLLCLTLTLAGTGA). Positions 18–29 (VPTGPSIEIHSR) are cleaved as a propeptide — activation peptide. In terms of domain architecture, Peptidase S1 spans 30–279 (IIGGWECDKH…YISWIQETIK (250 aa)). Cystine bridges form between Cys36/Cys194, Cys57/Cys73, Cys170/Cys240, Cys205/Cys219, and Cys230/Cys255. His72 (charge relay system) is an active-site residue. O-linked (GalNAc...) serine glycosylation occurs at Ser100. N-linked (GlcNAc...) asparagine glycans are attached at residues Asn109 and Asn122. Residue Asp138 is the Charge relay system of the active site. Ser234 acts as the Charge relay system in catalysis.

This sequence belongs to the peptidase S1 family. Kallikrein subfamily. In terms of tissue distribution, submaxillary and sublingual salivary glands.

It is found in the secreted. Its activity is regulated as follows. Strongly inhibited by aprotinin, moderately inhibited by secretory leukoprotease inhibitor, the Kunitz-type soybean trypsin inhibitor, and leupeptin, and not inhibited by urinary trypsin inhibitor or alpha-1 protease inhibitor. Functionally, has kallikrein-like activity, converts kininogens to kinins, and has dilatory effects on the blood vessel walls. Shows highest activity toward Pro-Phe-Arg-MCA and Boc-Val-Leu-Lys-MCA in vitro. Has preference for Arg and Lys in position P1 and hydrophobic residues in position P2. This Blarina brevicauda (Northern short-tailed shrew) protein is Blarina toxin (BTX).